A 474-amino-acid polypeptide reads, in one-letter code: Glutamate--tRNA ligase 2 (474 aa).

The 'HIGH' region motif lies at proline 16–glycine 26. Positions lysine 245–arginine 249 match the 'KMSKS' region motif. Residue lysine 248 participates in ATP binding.

Belongs to the class-I aminoacyl-tRNA synthetase family. Glutamate--tRNA ligase type 1 subfamily. As to quaternary structure, monomer.

It localises to the cytoplasm. The catalysed reaction is tRNA(Glu) + L-glutamate + ATP = L-glutamyl-tRNA(Glu) + AMP + diphosphate. In terms of biological role, catalyzes the attachment of glutamate to tRNA(Glu) in a two-step reaction: glutamate is first activated by ATP to form Glu-AMP and then transferred to the acceptor end of tRNA(Glu). This is Glutamate--tRNA ligase 2 from Rhizorhabdus wittichii (strain DSM 6014 / CCUG 31198 / JCM 15750 / NBRC 105917 / EY 4224 / RW1) (Sphingomonas wittichii).